The sequence spans 156 residues: Small ribosomal subunit protein uS7 (156 aa).

The protein belongs to the universal ribosomal protein uS7 family. Part of the 30S ribosomal subunit. Contacts proteins S9 and S11.

One of the primary rRNA binding proteins, it binds directly to 16S rRNA where it nucleates assembly of the head domain of the 30S subunit. Is located at the subunit interface close to the decoding center, probably blocks exit of the E-site tRNA. The polypeptide is Small ribosomal subunit protein uS7 (Shigella dysenteriae serotype 1 (strain Sd197)).